Consider the following 352-residue polypeptide: Holliday junction branch migration complex subunit RuvB (352 aa).

The interval 5 to 191 is large ATPase domain (RuvB-L); the sequence is TDDFSEQRII…FGIVARLEFY (187 aa). ATP-binding positions include Leu-30, Arg-31, Gly-72, Lys-75, Thr-76, Thr-77, 138–140, Arg-181, Tyr-191, and Arg-228; that span reads EDY. Mg(2+) is bound at residue Thr-76. Residues 192 to 262 form a small ATPAse domain (RuvB-S) region; the sequence is TPLELTKIVT…MADAALVMLD (71 aa). The interval 265–352 is head domain (RuvB-H); sequence PVGFDLMDRK…GPNGDLWAGQ (88 aa). DNA is bound by residues Arg-301, Arg-320, and Arg-325.

Belongs to the RuvB family. As to quaternary structure, homohexamer. Forms an RuvA(8)-RuvB(12)-Holliday junction (HJ) complex. HJ DNA is sandwiched between 2 RuvA tetramers; dsDNA enters through RuvA and exits via RuvB. An RuvB hexamer assembles on each DNA strand where it exits the tetramer. Each RuvB hexamer is contacted by two RuvA subunits (via domain III) on 2 adjacent RuvB subunits; this complex drives branch migration. In the full resolvosome a probable DNA-RuvA(4)-RuvB(12)-RuvC(2) complex forms which resolves the HJ.

The protein localises to the cytoplasm. It carries out the reaction ATP + H2O = ADP + phosphate + H(+). Functionally, the RuvA-RuvB-RuvC complex processes Holliday junction (HJ) DNA during genetic recombination and DNA repair, while the RuvA-RuvB complex plays an important role in the rescue of blocked DNA replication forks via replication fork reversal (RFR). RuvA specifically binds to HJ cruciform DNA, conferring on it an open structure. The RuvB hexamer acts as an ATP-dependent pump, pulling dsDNA into and through the RuvAB complex. RuvB forms 2 homohexamers on either side of HJ DNA bound by 1 or 2 RuvA tetramers; 4 subunits per hexamer contact DNA at a time. Coordinated motions by a converter formed by DNA-disengaged RuvB subunits stimulates ATP hydrolysis and nucleotide exchange. Immobilization of the converter enables RuvB to convert the ATP-contained energy into a lever motion, pulling 2 nucleotides of DNA out of the RuvA tetramer per ATP hydrolyzed, thus driving DNA branch migration. The RuvB motors rotate together with the DNA substrate, which together with the progressing nucleotide cycle form the mechanistic basis for DNA recombination by continuous HJ branch migration. Branch migration allows RuvC to scan DNA until it finds its consensus sequence, where it cleaves and resolves cruciform DNA. The sequence is that of Holliday junction branch migration complex subunit RuvB from Janthinobacterium sp. (strain Marseille) (Minibacterium massiliensis).